Here is a 696-residue protein sequence, read N- to C-terminus: MVQRYQSPVRVYKYPFELVMAAYEKRFPTCPQIPVFLGSEVLRESRSPDGAVHVVERSCRLRVDAPRLLRKIAGVEHVVFVQTNILNWKERTLLIEAHNETFANRVVVNEHCSYTVHPENEDWTCFEQSASLDIRSFFGFENALEKIAMKQYTANVKRGKEVIEHYLNELISQGTSHIPRWTPAPVREEDARNQAGPRDPSSLEAHGPRSTLGPALEAVSMDGDKLDADYIERCLGHLTPMQESCLIQLRHWLQETHKGKIPKDEHILRFLRAHDFHLDKAREMLRQSLSWRKQHQVDLLLQTWQPPALLEEFYAGGWHYQDIDGRPLYILRLGQMDTKGLMKAVGEEALLRHVLSVNEEGQKRCEGSTRQLGRPISSWTCLLDLEGLNMRHLWRPGVKALLRMIEVVEDNYPETLGRLLIVRAPRVFPVLWTLISPFINENTRRKFLIYSGSNYQGPGGLVDYLDREVIPDFLGGESVCNVPEGGLVPKSLYMTEEEQEHTDQLWQWSETYHSASVLRGAPHEVAVEILEGESVITWDFDILRGDVVFSLYHTKQAPRLGAREPGTRASGQLIDKGWVLGRDYSRVEAPLVCREGESIQGSHVTRWPGVYLLQWQMHSPPSSVACSLPGVDDVLTALHSPGPKCKLLYYCEVLASEDFRGSMSSLESCTSGFSQLSAATSSSSSGQSHSSSLVSR.

The PRELI/MSF1 domain occupies valine 2–threonine 175. The disordered stretch occupies residues isoleucine 178 to proline 214. Residues proline 306–valine 482 enclose the CRAL-TRIO domain. One can recognise a GOLD domain in the interval serine 509–valine 653.

In Homo sapiens (Human), this protein is SEC14-like protein 5 (SEC14L5).